The chain runs to 842 residues: Elongation factor 2 (842 aa).

Residues 17–253 (TNVRNMSVIA…LWGDSYFNPK (237 aa)) form the tr-type G domain. GTP-binding positions include 26 to 33 (AHVDHGKS), 158 to 161 (NKVD), and 213 to 215 (SGL). His699 carries the diphthamide modification.

The protein belongs to the TRAFAC class translation factor GTPase superfamily. Classic translation factor GTPase family. EF-G/EF-2 subfamily.

The protein resides in the cytoplasm. It catalyses the reaction GTP + H2O = GDP + phosphate + H(+). In terms of biological role, catalyzes the GTP-dependent ribosomal translocation step during translation elongation. During this step, the ribosome changes from the pre-translocational (PRE) to the post-translocational (POST) state as the newly formed A-site-bound peptidyl-tRNA and P-site-bound deacylated tRNA move to the P and E sites, respectively. Catalyzes the coordinated movement of the two tRNA molecules, the mRNA and conformational changes in the ribosome. This is Elongation factor 2 (EFT1) from Kluyveromyces lactis (strain ATCC 8585 / CBS 2359 / DSM 70799 / NBRC 1267 / NRRL Y-1140 / WM37) (Yeast).